The following is a 139-amino-acid chain: Large ribosomal subunit protein uL16 (139 aa).

Residues 1–13 (MLQPARRKYRKEQ) are compositionally biased toward basic residues. Residues 1–23 (MLQPARRKYRKEQKGRNTGISHS) form a disordered region.

It belongs to the universal ribosomal protein uL16 family. Part of the 50S ribosomal subunit.

Functionally, binds 23S rRNA and is also seen to make contacts with the A and possibly P site tRNAs. In Herminiimonas arsenicoxydans, this protein is Large ribosomal subunit protein uL16.